A 310-amino-acid polypeptide reads, in one-letter code: Carbamate kinase 1 (310 aa).

Belongs to the carbamate kinase family.

The protein localises to the cytoplasm. It catalyses the reaction hydrogencarbonate + NH4(+) + ATP = carbamoyl phosphate + ADP + H2O + H(+). Its pathway is metabolic intermediate metabolism; carbamoyl phosphate degradation; CO(2) and NH(3) from carbamoyl phosphate: step 1/1. In Staphylococcus aureus (strain COL), this protein is Carbamate kinase 1 (arcC1).